Consider the following 328-residue polypeptide: MAQPYPPAQYPPPPQNGIPAEYAPPPPHPTPDYSGQTPVPPEHGMTLYTPAQTHPEQPSSDTSTQPITGAQTVPQTDEAAQTDSQPLHPSDPTEKQQPKRLHVSNIPFRFRDPDLRQMFGQFGKILDVEIIFNERGSKVNNATARVMTNKKTANPYTNGWKLNPVVGAVYGPEFYAVTGFPYPTTGTAVAYRGAHLRGRGRAVYNTFRAAPPPPPIPTYGAALEQTLVKMPVPWAGLAPCPLPPQQTPEPAYPTSPAFPPLSCPFASRVVYQDGFYGAEIYGGYAAYRYAQPAAAAAAYSDSYGRVYAAADPYHHTIGPAATYSIGTM.

Over residues methionine 1–threonine 30 the composition is skewed to pro residues. The interval methionine 1–isoleucine 106 is disordered. The span at threonine 49–leucine 87 shows a compositional bias: polar residues. The RRM domain maps to lysine 99–proline 172. At arginine 192 the chain carries Asymmetric dimethylarginine; alternate. Arginine 192 is modified (omega-N-methylarginine; alternate). Arginine 288 is subject to Asymmetric dimethylarginine.

It localises to the nucleus. It is found in the cytoplasm. In terms of biological role, pre-mRNA alternative splicing regulator. Regulates alternative splicing of RBFOX2 to enhance the production of mRNA species that are targeted for nonsense-mediated decay (NMD). In Bos taurus (Bovine), this protein is RNA binding protein fox-1 homolog 3 (RBFOX3).